The sequence spans 425 residues: Formyl-CoA:oxalate CoA-transferase (425 aa).

CoA is bound by residues 17–18, Arg38, 72–75, 96–98, Arg104, and 136–139; these read QS, LDTK, NFG, and KVYE. The Nucleophile role is filled by Asp168. 247–249 is a substrate binding site; sequence GGQ.

The protein belongs to the CoA-transferase III family. Frc subfamily. Homodimer.

The catalysed reaction is formyl-CoA + oxalate = oxalyl-CoA + formate. It functions in the pathway metabolic intermediate degradation; oxalate degradation; CO(2) and formate from oxalate: step 1/2. Functionally, involved in the catabolism of oxalate and in the adapatation to low pH via the induction of the oxalate-dependent acid tolerance response (ATR). Catalyzes the transfer of the CoA moiety from formyl-CoA to oxalate. This chain is Formyl-CoA:oxalate CoA-transferase, found in Rhodopseudomonas palustris (strain TIE-1).